The primary structure comprises 472 residues: MSKKSVGKIVRIIGPVVDVKFQEGDLPDIYDALVVINPQTGKKLILEVEQLIGDNIVRTVAMDSTDGLVRGLEVENTGEPIKAPVGRGVLGRMFNVIGEPIDEQGELKDIEYWPIHRPAPSMTEQKTEIEILETGLKVIDLLAPFPKGGKIGFFGGAGVGKTVLVMEMIRNIAIEHHGFSIFAGVGERTREGNDLYLEMTEAGVLNNTVLVFGQMNEPPGARFRVALTALTIAEYFRDVEGRDVLLFIDNIFRFVQAGSEVSALLGRMPSAVGYQPTLSTDMGELQERITSTKKGSITSVQAIYVPADDITDPAPATTFTHLDATIVLSRQLAALGLYPAVDPLDSTSKILDPNIVGKEHYEVARGVQEVLQRYKDLQDIIAILGMEELSEEDKLIVQRARKIQRFLTQPTHVAERFSGIPGVYVPIKETIRGFKEILEGRYDDLPEAAFYMVGTIDEAVEKAKKLMKSAVI.

An ATP-binding site is contributed by 155 to 162 (GGAGVGKT).

It belongs to the ATPase alpha/beta chains family. As to quaternary structure, F-type ATPases have 2 components, CF(1) - the catalytic core - and CF(0) - the membrane proton channel. CF(1) has five subunits: alpha(3), beta(3), gamma(1), delta(1), epsilon(1). CF(0) has three main subunits: a(1), b(2) and c(9-12). The alpha and beta chains form an alternating ring which encloses part of the gamma chain. CF(1) is attached to CF(0) by a central stalk formed by the gamma and epsilon chains, while a peripheral stalk is formed by the delta and b chains.

The protein resides in the cell membrane. It catalyses the reaction ATP + H2O + 4 H(+)(in) = ADP + phosphate + 5 H(+)(out). Produces ATP from ADP in the presence of a proton gradient across the membrane. The catalytic sites are hosted primarily by the beta subunits. This chain is ATP synthase subunit beta, found in Fervidobacterium islandicum.